Consider the following 388-residue polypeptide: Succinate--CoA ligase [ADP-forming] subunit beta (388 aa).

An ATP-grasp domain is found at 9 to 244 (KQLFAQYGLP…PAQNDAREAH (236 aa)). ATP-binding positions include Lys-46, 53 to 55 (GRG), Glu-99, Thr-102, and Glu-107. Residues Asn-199 and Asp-213 each coordinate Mg(2+). Substrate contacts are provided by residues Asn-264 and 321–323 (GIV).

Belongs to the succinate/malate CoA ligase beta subunit family. Heterotetramer of two alpha and two beta subunits. Requires Mg(2+) as cofactor.

It carries out the reaction succinate + ATP + CoA = succinyl-CoA + ADP + phosphate. The enzyme catalyses GTP + succinate + CoA = succinyl-CoA + GDP + phosphate. It functions in the pathway carbohydrate metabolism; tricarboxylic acid cycle; succinate from succinyl-CoA (ligase route): step 1/1. In terms of biological role, succinyl-CoA synthetase functions in the citric acid cycle (TCA), coupling the hydrolysis of succinyl-CoA to the synthesis of either ATP or GTP and thus represents the only step of substrate-level phosphorylation in the TCA. The beta subunit provides nucleotide specificity of the enzyme and binds the substrate succinate, while the binding sites for coenzyme A and phosphate are found in the alpha subunit. In Edwardsiella ictaluri (strain 93-146), this protein is Succinate--CoA ligase [ADP-forming] subunit beta.